The chain runs to 387 residues: Protein NDRG3 (387 aa).

The tract at residues proline 329–cysteine 387 is disordered. The span at threonine 359–glutamine 377 shows a compositional bias: low complexity.

Belongs to the NDRG family.

This chain is Protein NDRG3, found in Xenopus tropicalis (Western clawed frog).